The sequence spans 348 residues: Sulfate/thiosulfate import ATP-binding protein CysA (348 aa).

The ABC transporter domain maps to 3–237 (IRIQELRKQF…PSSPFVYSFV (235 aa)). Residue 35-42 (GPSGSGKT) coordinates ATP.

The protein belongs to the ABC transporter superfamily. Sulfate/tungstate importer (TC 3.A.1.6) family. The complex is composed of two ATP-binding proteins (CysA), two transmembrane proteins (CysT and CysW) and a solute-binding protein (CysP).

It is found in the cell inner membrane. It carries out the reaction sulfate(out) + ATP + H2O = sulfate(in) + ADP + phosphate + H(+). The enzyme catalyses thiosulfate(out) + ATP + H2O = thiosulfate(in) + ADP + phosphate + H(+). Part of the ABC transporter complex CysAWTP involved in sulfate/thiosulfate import. Responsible for energy coupling to the transport system. The sequence is that of Sulfate/thiosulfate import ATP-binding protein CysA from Xylella fastidiosa (strain Temecula1 / ATCC 700964).